Reading from the N-terminus, the 293-residue chain is Methylsterol monooxygenase 1 (293 aa).

2 helical membrane passes run 55 to 75 (LIVH…FQFI) and 100 to 120 (VLLF…YYFT). The region spanning 145-274 (CAVIEDTWHY…FTWWDRIFGT (130 aa)) is the Fatty acid hydroxylase domain. Positions 157 to 161 (HRLLH) match the Histidine box-1 motif. Positions 170–174 (HKVHH) match the Histidine box-2 motif. A helical transmembrane segment spans residues 199-219 (FFIGIVLLCDHVILLWAWVTI). The Histidine box-3 motif lies at 249 to 255 (HHDFHHM).

Belongs to the sterol desaturase family. Requires Fe cation as cofactor. In terms of processing, ubiquitinated by MARCHF6, leading to proteasomal degradation.

The protein localises to the endoplasmic reticulum membrane. The catalysed reaction is 4,4-dimethyl-5alpha-cholest-7-en-3beta-ol + 6 Fe(II)-[cytochrome b5] + 3 O2 + 5 H(+) = 4alpha-carboxy-4beta-methyl-5alpha-cholest-7-ene-3beta-ol + 6 Fe(III)-[cytochrome b5] + 4 H2O. The enzyme catalyses 4,4-dimethyl-5alpha-cholesta-8,24-dien-3beta-ol + 6 Fe(II)-[cytochrome b5] + 3 O2 + 5 H(+) = 4beta-methylzymosterol-4alpha-carboxylate + 6 Fe(III)-[cytochrome b5] + 4 H2O. It catalyses the reaction 4alpha-methylzymosterol + 6 Fe(II)-[cytochrome b5] + 3 O2 + 5 H(+) = 4alpha-carboxyzymosterol + 6 Fe(III)-[cytochrome b5] + 4 H2O. It carries out the reaction 4alpha-methyl-5alpha-cholest-7-en-3beta-ol + 6 Fe(II)-[cytochrome b5] + 3 O2 + 5 H(+) = 4alpha-carboxy-5alpha-cholest-7-en-3beta-ol + 6 Fe(III)-[cytochrome b5] + 4 H2O. The catalysed reaction is 4,4-dimethyl-5alpha-cholest-8-en-3beta-ol + 6 Fe(II)-[cytochrome b5] + 3 O2 + 5 H(+) = 4alpha-carboxy-4beta-methyl-5alpha-cholest-8-en-3beta-ol + 6 Fe(III)-[cytochrome b5] + 4 H2O. The enzyme catalyses 4alpha-methyl-5alpha-cholest-8-en-3beta-ol + 6 Fe(II)-[cytochrome b5] + 3 O2 + 5 H(+) = 4alpha-carboxy-5alpha-cholest-8-ene-3beta-ol + 6 Fe(III)-[cytochrome b5] + 4 H2O. It participates in steroid biosynthesis; zymosterol biosynthesis; zymosterol from lanosterol: step 3/6. The protein operates within steroid biosynthesis; cholesterol biosynthesis. Functionally, catalyzes the three-step monooxygenation required for the demethylation of 4,4-dimethyl and 4alpha-methylsterols, which can be subsequently metabolized to cholesterol. This Macaca fascicularis (Crab-eating macaque) protein is Methylsterol monooxygenase 1 (MSMO1).